Consider the following 278-residue polypeptide: MAILETRDLKYSYPDGTVALNGINFKAEKGEMIAILGPNGAGKSTTFLHFNGILKPSNGSVILKGEAIKYDNKSLLNVRKTVGIVFQNPDDQLFAPTVEQDVAFGPMNLGLSKEEIEKRVKDSLKAVSMEGFERKPPHHLSGGQKKRIAIAGILAMNPEIIVLDEPTSGLDPMGASQIMKLLYELNRQGITIIISTHDVDLVPIYANKVYLLNEGKIIKGGTPREIFSDSETVRSANLRLPRVAHLIELLDKEDKLGIKMGYTIGEARNNIKEFIKGE.

The region spanning 4–239 is the ABC transporter domain; that stretch reads LETRDLKYSY…SETVRSANLR (236 aa). An ATP-binding site is contributed by 37–44; sequence GPNGAGKS.

The protein belongs to the ABC transporter superfamily. Energy-coupling factor EcfA family. In terms of assembly, forms a stable energy-coupling factor (ECF) transporter complex composed of 2 membrane-embedded substrate-binding proteins (S component), 2 ATP-binding proteins (A component) and 2 transmembrane proteins (T component).

It is found in the cell membrane. In terms of biological role, ATP-binding (A) component of a common energy-coupling factor (ECF) ABC-transporter complex. Unlike classic ABC transporters this ECF transporter provides the energy necessary to transport a number of different substrates. The chain is Energy-coupling factor transporter ATP-binding protein EcfA from Methanococcus maripaludis (strain DSM 14266 / JCM 13030 / NBRC 101832 / S2 / LL).